The sequence spans 867 residues: Cadherin-related family member 1 (867 aa).

The N-terminal stretch at 1–21 is a signal peptide; sequence MGRGPPAVLAPWMLFLSLAQA. The Extracellular portion of the chain corresponds to 22 to 701; the sequence is NFAPHFFDNG…LMQTKDNPMK (680 aa). Cadherin domains are found at residues 36-135, 136-247, 248-354, 360-473, 474-577, and 574-689; these read NGNM…APRF, IQEP…GPVF, VGTP…PPTF, PQNR…VPKF, TSHY…YPQF, and YPQF…SPMA. Asn-58 and Asn-89 each carry an N-linked (GlcNAc...) asparagine glycan. N-linked (GlcNAc...) asparagine glycans are attached at residues Asn-288 and Asn-297. Residues 702–722 traverse the membrane as a helical segment; it reads AVGVLAGIMAIIVAITVLIST. The Cytoplasmic segment spans residues 723-867; the sequence is ATFWRNKKSN…KKNLHSKAYF (145 aa). The segment at 767 to 843 is disordered; that stretch reads KFVLREAPPN…VAKRKAVGSP (77 aa). Residues 777–786 show a composition bias toward polar residues; that stretch reads ENCNNNSRGS. Residues 790-802 are compositionally biased toward pro residues; that stretch reads PQAPAPPPPPSPA.

Interacts with PROM1. Undergoes proteolytic cleavage; produces a soluble 95 kDa N-terminal fragment and a 25 kDa cell-associated C-terminal fragment. In terms of tissue distribution, expressed in photoreceptor cells of the outer nuclear layer of the retina.

Its subcellular location is the cell membrane. Functionally, potential calcium-dependent cell-adhesion protein. May be required for the structural integrity of the outer segment (OS) of photoreceptor cells. The polypeptide is Cadherin-related family member 1 (CDHR1) (Bos taurus (Bovine)).